A 310-amino-acid chain; its full sequence is RING-H2 finger protein ATL60 (310 aa).

Residues 24 to 44 (VLLFSIVSIFTGILFLLLLHL) traverse the membrane as a helical segment. The RING-type; atypical zinc finger occupies 120–162 (CAVCLSDLVDGDKARVLPRCNHGFHVDCIDMWFQSHSTCPLCR). Disordered regions lie at residues 170–201 (DTTHGGSEGLPQNQNFESGHSTNQHNPSQDQS) and 240–260 (GNFAASYNDHQQESSSTRSQE). Over residues 179 to 201 (LPQNQNFESGHSTNQHNPSQDQS) the composition is skewed to polar residues.

It belongs to the RING-type zinc finger family. ATL subfamily.

It is found in the membrane. The enzyme catalyses S-ubiquitinyl-[E2 ubiquitin-conjugating enzyme]-L-cysteine + [acceptor protein]-L-lysine = [E2 ubiquitin-conjugating enzyme]-L-cysteine + N(6)-ubiquitinyl-[acceptor protein]-L-lysine.. Its pathway is protein modification; protein ubiquitination. The chain is RING-H2 finger protein ATL60 (ATL60) from Arabidopsis thaliana (Mouse-ear cress).